A 287-amino-acid chain; its full sequence is Protein PXR1 (287 aa).

A G-patch domain is found at 25 to 72; that stretch reads TSRFGHLQLEKFGWKPGMGLGMSPTSSHKTHIKVSIKDDNLGLGAKIK. Residues 143 to 155 show a composition bias toward basic and acidic residues; the sequence is LKSYSNDKKRSRD. The disordered stretch occupies residues 143-254; sequence LKSYSNDKKR…TTASNIPSTV (112 aa). The span at 163-190 shows a compositional bias: basic residues; that stretch reads SKNKSKKQKKDKKDKKDKKDKKDKKDKK. Residues 191 to 200 are compositionally biased toward basic and acidic residues; sequence DKKDKTEKKE. Basic residues predominate over residues 201–220; that stretch reads KKEKKEKKEKKEKKDKKDKK. Residues 221–230 show a composition bias toward basic and acidic residues; it reads DKKDKIDKKD. The segment covering 239-251 has biased composition (polar residues); sequence NNIEVSTTASNIP.

The protein belongs to the PINX1 family.

Its subcellular location is the nucleus. The protein localises to the nucleolus. Its function is as follows. Involved in rRNA-processing at A0, A1 and A2 sites and negatively regulates telomerase. In Vanderwaltozyma polyspora (strain ATCC 22028 / DSM 70294 / BCRC 21397 / CBS 2163 / NBRC 10782 / NRRL Y-8283 / UCD 57-17) (Kluyveromyces polysporus), this protein is Protein PXR1 (PXR1).